The following is a 100-amino-acid chain: Small ubiquitin-related modifier 1 (100 aa).

In terms of domain architecture, Ubiquitin-like spans 19–96 (EYIKLKVIGQ…IEVYQEQTGG (78 aa)). Residue Gly-96 forms a Glycyl lysine isopeptide (Gly-Lys) (interchain with K-? in acceptor proteins) linkage. Positions 97-100 (CRND) are excised as a propeptide.

It belongs to the ubiquitin family. SUMO subfamily. Interacts with sae2, ube2i, ranbp2, pias1 and pias2. Covalently attached to a number of proteins. Post-translationally, cleavage of precursor form by a sentrin-specific protease is necessary for function.

It localises to the nucleus membrane. It is found in the nucleus speckle. The protein localises to the cytoplasm. The protein resides in the nucleus. Its subcellular location is the PML body. It localises to the cell membrane. Ubiquitin-like protein that can be covalently attached to proteins as a monomer or a lysine-linked polymer. Covalent attachment via an isopeptide bond to its substrates requires prior activation by the E1 complex sae1-sae2 and linkage to the E2 enzyme ube2i. This post-translational modification on lysine residues of proteins plays a crucial role in a number of cellular processes such as nuclear transport, DNA replication and repair, mitosis and signal transduction. Polymeric sumo1 chains are also susceptible to polyubiquitination which functions as a signal for proteasomal degradation of modified proteins. The polypeptide is Small ubiquitin-related modifier 1 (sumo1) (Danio rerio (Zebrafish)).